The chain runs to 629 residues: tRNA uridine 5-carboxymethylaminomethyl modification enzyme MnmG (629 aa).

FAD is bound at residue 13–18; the sequence is GGGHAG. Residue 273-287 coordinates NAD(+); the sequence is GPRYCPSIEDKIHRF.

It belongs to the MnmG family. In terms of assembly, homodimer. Heterotetramer of two MnmE and two MnmG subunits. The cofactor is FAD.

The protein resides in the cytoplasm. Functionally, NAD-binding protein involved in the addition of a carboxymethylaminomethyl (cmnm) group at the wobble position (U34) of certain tRNAs, forming tRNA-cmnm(5)s(2)U34. The polypeptide is tRNA uridine 5-carboxymethylaminomethyl modification enzyme MnmG (Shewanella amazonensis (strain ATCC BAA-1098 / SB2B)).